The chain runs to 298 residues: Lipoyl synthase (298 aa).

[4Fe-4S] cluster-binding residues include Cys-43, Cys-48, Cys-54, Cys-69, Cys-73, Cys-76, and Ser-280. Residues 55–269 (FSSGTATFLI…AACGRGMGIP (215 aa)) form the Radical SAM core domain.

The protein belongs to the radical SAM superfamily. Lipoyl synthase family. It depends on [4Fe-4S] cluster as a cofactor.

The protein resides in the cytoplasm. The catalysed reaction is [[Fe-S] cluster scaffold protein carrying a second [4Fe-4S](2+) cluster] + N(6)-octanoyl-L-lysyl-[protein] + 2 oxidized [2Fe-2S]-[ferredoxin] + 2 S-adenosyl-L-methionine + 4 H(+) = [[Fe-S] cluster scaffold protein] + N(6)-[(R)-dihydrolipoyl]-L-lysyl-[protein] + 4 Fe(3+) + 2 hydrogen sulfide + 2 5'-deoxyadenosine + 2 L-methionine + 2 reduced [2Fe-2S]-[ferredoxin]. The protein operates within protein modification; protein lipoylation via endogenous pathway; protein N(6)-(lipoyl)lysine from octanoyl-[acyl-carrier-protein]: step 2/2. Its function is as follows. Catalyzes the radical-mediated insertion of two sulfur atoms into the C-6 and C-8 positions of the octanoyl moiety bound to the lipoyl domains of lipoate-dependent enzymes, thereby converting the octanoylated domains into lipoylated derivatives. The sequence is that of Lipoyl synthase from Nitratidesulfovibrio vulgaris (strain ATCC 29579 / DSM 644 / CCUG 34227 / NCIMB 8303 / VKM B-1760 / Hildenborough) (Desulfovibrio vulgaris).